The sequence spans 85 residues: uncharacterized protein (85 aa).

This is an uncharacterized protein from Shigella flexneri.